A 400-amino-acid polypeptide reads, in one-letter code: Probable RNA polymerase sigma factor RfaY (400 aa).

Residues 62 to 75 carry the Polymerase core binding motif; the sequence is WQRLAQLHQPASFL. A DNA-binding region (H-T-H motif) is located at residues 165 to 184; the sequence is SDAAVRKRLSRARATVRNEL.

Belongs to the sigma-70 factor family. ECF subfamily.

Its function is as follows. Sigma factors are initiation factors that promote the attachment of RNA polymerase to specific initiation sites and are then released. This sigma factor is involved in lipopolysaccharide biosynthesis and pathogenicity. This is Probable RNA polymerase sigma factor RfaY (rfaY) from Xanthomonas campestris pv. campestris (strain ATCC 33913 / DSM 3586 / NCPPB 528 / LMG 568 / P 25).